We begin with the raw amino-acid sequence, 533 residues long: Glucose-6-phosphate isomerase (533 aa).

Residue Glu-341 is the Proton donor of the active site. Residues His-372 and Lys-501 contribute to the active site.

It belongs to the GPI family.

It localises to the cytoplasm. It catalyses the reaction alpha-D-glucose 6-phosphate = beta-D-fructose 6-phosphate. Its pathway is carbohydrate biosynthesis; gluconeogenesis. It functions in the pathway carbohydrate degradation; glycolysis; D-glyceraldehyde 3-phosphate and glycerone phosphate from D-glucose: step 2/4. Functionally, catalyzes the reversible isomerization of glucose-6-phosphate to fructose-6-phosphate. In Cereibacter sphaeroides (strain ATCC 17029 / ATH 2.4.9) (Rhodobacter sphaeroides), this protein is Glucose-6-phosphate isomerase.